The chain runs to 154 residues: Protein Smg homolog (154 aa).

This sequence belongs to the Smg family.

The chain is Protein Smg homolog from Aromatoleum aromaticum (strain DSM 19018 / LMG 30748 / EbN1) (Azoarcus sp. (strain EbN1)).